A 269-amino-acid polypeptide reads, in one-letter code: Phosphate import ATP-binding protein PstB (269 aa).

Residues 22 to 264 (AEVRDLNFYY…PVQQKTADYV (243 aa)) enclose the ABC transporter domain. An ATP-binding site is contributed by 54–61 (GPSGCGKT).

This sequence belongs to the ABC transporter superfamily. Phosphate importer (TC 3.A.1.7) family. The complex is composed of two ATP-binding proteins (PstB), two transmembrane proteins (PstC and PstA) and a solute-binding protein (PstS).

Its subcellular location is the cell inner membrane. The enzyme catalyses phosphate(out) + ATP + H2O = ADP + 2 phosphate(in) + H(+). Functionally, part of the ABC transporter complex PstSACB involved in phosphate import. Responsible for energy coupling to the transport system. This is Phosphate import ATP-binding protein PstB from Thermosynechococcus vestitus (strain NIES-2133 / IAM M-273 / BP-1).